A 275-amino-acid polypeptide reads, in one-letter code: Probable siderophore transport system ATP-binding protein YusV (275 aa).

The ABC transporter domain occupies 6–242; it reads ISTETLSLGY…DLVQNVFSMN (237 aa). An ATP-binding site is contributed by 38 to 45; the sequence is GSNGCGKS.

Belongs to the ABC transporter superfamily. In terms of assembly, the iron-hydroxamate siderophore complex is composed of one ATP-binding protein (YusV), two transmembrane proteins (YfiZ and YfhA) and a solute-binding protein (YfiY); the catechoplate siderophore complex is composed of one ATP-binding protein (YusV), two transmembrane proteins (FeuB and FeuC) and a solute-binding protein (FeuA).

The protein localises to the cell membrane. Functionally, provides the ATPase subunit for at least 2 ABC transporter complexes; YfiYZ/YfhA/YusV involved in import of the iron-hydroxamate siderophores schizokinen, arthrobactin and corprogen, and FeuABC/YusV involved in import of the catecholate siderophores bacillibactin and enterobactin. Probably responsible for energy coupling to the transport system. This is Probable siderophore transport system ATP-binding protein YusV (yusV) from Bacillus subtilis (strain 168).